Reading from the N-terminus, the 199-residue chain is Protein GrpE (199 aa).

A compositionally biased stretch (basic and acidic residues) spans 1-24; the sequence is MSKQNKKDWKKFKDEHKEEHKVEN. A disordered region spans residues 1 to 47; it reads MSKQNKKDWKKFKDEHKEEHKVENEILEEEIDEKSQHQEPALGHPSY.

Belongs to the GrpE family. As to quaternary structure, homodimer.

Its subcellular location is the cytoplasm. Functionally, participates actively in the response to hyperosmotic and heat shock by preventing the aggregation of stress-denatured proteins, in association with DnaK and GrpE. It is the nucleotide exchange factor for DnaK and may function as a thermosensor. Unfolded proteins bind initially to DnaJ; upon interaction with the DnaJ-bound protein, DnaK hydrolyzes its bound ATP, resulting in the formation of a stable complex. GrpE releases ADP from DnaK; ATP binding to DnaK triggers the release of the substrate protein, thus completing the reaction cycle. Several rounds of ATP-dependent interactions between DnaJ, DnaK and GrpE are required for fully efficient folding. This chain is Protein GrpE, found in Legionella pneumophila (strain Paris).